A 141-amino-acid chain; its full sequence is Arsenate reductase (141 aa).

The active-site Nucleophile; cysteine thioarsenate intermediate is Cys12.

It belongs to the ArsC family. Monomer in solution.

It carries out the reaction [glutaredoxin]-dithiol + arsenate + glutathione + H(+) = glutathionyl-S-S-[glutaredoxin] + arsenite + H2O. With respect to regulation, inhibited by the thiol reagents iodoacetate (IAA) and N-ethylmaleimide (NEM). Activity is rapidly inactivated by the histidine-modifying reagent diethylpyrocarbonate (DEPC). Functionally, involved in resistance to arsenate. Catalyzes the reduction of arsenate [As(V)] to arsenite [As(III)]. The resulting arsenite is then extruded from the cell via the ArsAB transport system. In Escherichia coli, this protein is Arsenate reductase.